The sequence spans 362 residues: Histidinol-phosphate aminotransferase (362 aa).

K218 carries the N6-(pyridoxal phosphate)lysine modification.

The protein belongs to the class-II pyridoxal-phosphate-dependent aminotransferase family. Histidinol-phosphate aminotransferase subfamily. Homodimer. Requires pyridoxal 5'-phosphate as cofactor.

The catalysed reaction is L-histidinol phosphate + 2-oxoglutarate = 3-(imidazol-4-yl)-2-oxopropyl phosphate + L-glutamate. It functions in the pathway amino-acid biosynthesis; L-histidine biosynthesis; L-histidine from 5-phospho-alpha-D-ribose 1-diphosphate: step 7/9. The polypeptide is Histidinol-phosphate aminotransferase (Xanthomonas campestris pv. campestris (strain B100)).